Here is a 284-residue protein sequence, read N- to C-terminus: Tropomyosin alpha-1 chain (284 aa).

The interval 1 to 38 (MDAIKKKMQMLKLDKENALDRAEQAEADKKGAEDKSKQ) is disordered. Residues 1–284 (MDAIKKKMQM…DHALNDMTSI (284 aa)) are a coiled coil. Basic and acidic residues predominate over residues 12–38 (KLDKENALDRAEQAEADKKGAEDKSKQ).

Belongs to the tropomyosin family. Homodimer. Heterodimer of an alpha (TPM1, TPM3 or TPM4) and a beta (TPM2) chain.

It localises to the cytoplasm. The protein localises to the cytoskeleton. In terms of biological role, binds to actin filaments in muscle and non-muscle cells. Plays a central role, in association with the troponin complex, in the calcium dependent regulation of vertebrate striated muscle contraction. Smooth muscle contraction is regulated by interaction with caldesmon. In non-muscle cells is implicated in stabilizing cytoskeleton actin filaments. This Xenopus laevis (African clawed frog) protein is Tropomyosin alpha-1 chain (tpm1).